The sequence spans 290 residues: Homeobox protein EMX1 (290 aa).

Residues 192–251 (PKRIRTAFSPSQLLRLERAFEKNHYVVGAERKQLAGSLSLSETQVKVWFQNRRTKYKRQK) constitute a DNA-binding region (homeobox). Positions 249-290 (RQKLEEEGPESEQKKKGSHHINRWRIATKQANGEDIDVTSND) are disordered. Over residues 250–263 (QKLEEEGPESEQKK) the composition is skewed to basic and acidic residues.

The protein belongs to the EMX homeobox family. In terms of assembly, interacts with WRD11 (via the N-terminal and the central portion of the protein); the interaction associates EMX1 with GLI3. As to expression, cerebral cortex.

Its subcellular location is the nucleus. The protein localises to the cytoplasm. Functionally, transcription factor, which in cooperation with EMX2, acts to generate the boundary between the roof and archipallium in the developing brain. May function in combinations with OTX1/2 to specify cell fates in the developing central nervous system. The sequence is that of Homeobox protein EMX1 from Homo sapiens (Human).